We begin with the raw amino-acid sequence, 495 residues long: MFS transporter prlL (495 aa).

The disordered stretch occupies residues 1 to 24 (MAQSFANEHDPAKRAEERGHVGTI). A compositionally biased stretch (basic and acidic residues) spans 7 to 20 (NEHDPAKRAEERGH). A run of 11 helical transmembrane segments spans residues 102 to 122 (IALM…NVLL), 130 to 150 (WIAI…GAHN), 159 to 179 (FLLG…LTFW), 189 to 209 (VAFI…IAYA), 224 to 244 (WLFI…LFFL), 292 to 312 (LWAH…LSLF), 329 to 349 (LMTV…SWSA), 356 to 376 (GLHS…SAVL), 386 to 406 (GCLI…LGWL), 418 to 438 (LAIA…GVWI), and 449 to 469 (PTGH…CVAL).

The protein belongs to the major facilitator superfamily.

It localises to the cell membrane. Efflux pump that might be required for efficient secretion of pyrrolocin or other secondary metabolies produced by the pyrrolocin gene cluster. This Fungal sp. (strain NRRL 50135) protein is MFS transporter prlL.